A 66-amino-acid chain; its full sequence is UPF0391 membrane protein AM1_5042 (66 aa).

Helical transmembrane passes span 4 to 24 (LTLT…SGIA) and 28 to 47 (AAIA…LVWP).

It belongs to the UPF0391 family.

The protein localises to the cell membrane. This is UPF0391 membrane protein AM1_5042 from Acaryochloris marina (strain MBIC 11017).